The chain runs to 638 residues: ABC transporter G family member 12 (638 aa).

A disordered region spans residues 42-61; that stretch reads KQEKAKKKNDTESSTGDMNT. The 244-residue stretch at 58–301 folds into the ABC transporter domain; it reads DMNTGVSTTI…SLGYPCPNNT (244 aa). 91–98 contacts ATP; it reads GPSGSGKS. The ABC transmembrane type-2 domain maps to 374 to 633; it reads GNFVARVGTA…WTSYLALHFL (260 aa). 7 helical membrane passes run 376–396, 410–430, 459–479, 484–504, 516–536, 544–564, and 612–632; these read FVAR…CFAG, TIFF…SLFL, TLIV…FAHL, GHFF…DFMI, MTFA…GFYV, SFGW…LVVN, and FGVV…ALHF.

It belongs to the ABC transporter superfamily. ABCG family. Eye pigment precursor importer (TC 3.A.1.204) subfamily.

It is found in the membrane. In Dictyostelium discoideum (Social amoeba), this protein is ABC transporter G family member 12 (abcG12).